The chain runs to 674 residues: Probable copper-transporting P-type ATPase B (674 aa).

The tract at residues 1–22 is disordered; the sequence is MNHSNQMHHDNHESHNHHSGHA. A compositionally biased stretch (basic and acidic residues) spans 7–16; it reads MHHDNHESHN. 6 consecutive transmembrane segments (helical) span residues 32 to 52, 57 to 77, 95 to 115, 127 to 147, 284 to 304, and 315 to 335; these read FFVSLIFAIPIILLSPLMGIN, FTFPGSEWVVLILSTILFFYG, GMMTLVALGISVAYIYSLYAF, TMDFFWELATLILIMLLGHWI, GYLFYFAVIVGVISFIVWMLI, and LVTVLVIACPHALGLAIPLVT. The active-site 4-aspartylphosphate intermediate is the aspartate 367. The Mg(2+) site is built by aspartate 565 and aspartate 569. The next 2 helical transmembrane spans lie at 623 to 645 and 649 to 671; these read LWWGAGYNIVAVPLAAGALAFVG and SPAVGAILMSLSTVIVAINAFTL.

It belongs to the cation transport ATPase (P-type) (TC 3.A.3) family. Type IB subfamily.

It localises to the cell membrane. It carries out the reaction Cu(+)(in) + ATP + H2O = Cu(+)(out) + ADP + phosphate + H(+). Functionally, involved in copper transport. This is Probable copper-transporting P-type ATPase B (copB) from Staphylococcus epidermidis (strain ATCC 12228 / FDA PCI 1200).